Reading from the N-terminus, the 111-residue chain is Prostatic steroid-binding protein C1 (111 aa).

The N-terminal stretch at 1 to 23 (MSTIKLSLCLLIMLAVCCYEANA) is a signal peptide.

The protein belongs to the secretoglobin family. Lipophilin subfamily. In terms of assembly, prostatein is composed of three different peptides called C1, C2 and C3. These form covalent C1:C3 (F) and C2:C3 (S) heterodimers whose noncovalent association forms tetrameric (C1:C3/C3:C2) prostatein molecules.

It localises to the secreted. In terms of biological role, part of prostatein which is the major secretory glycoprotein of ventral prostate gland. The chain is Prostatic steroid-binding protein C1 (Psbpc1) from Rattus norvegicus (Rat).